Consider the following 157-residue polypeptide: Large ribosomal subunit protein eL24 (157 aa).

Residues 95 to 157 (NQKPEVRKAQ…VSAPRVGGKR (63 aa)) are disordered. Residues 96–117 (QKPEVRKAQREQAIRAAKEAKK) are compositionally biased toward basic and acidic residues. The span at 123-145 (KKQTTQSSKAPAKSAQKQKIAKP) shows a compositional bias: low complexity.

Belongs to the eukaryotic ribosomal protein eL24 family. In terms of assembly, component of the large ribosomal subunit.

The protein localises to the cytoplasm. Component of the large ribosomal subunit. The ribosome is a large ribonucleoprotein complex responsible for the synthesis of proteins in the cell. Plays an essential role in early embryonic development. This is Large ribosomal subunit protein eL24 (rpl24) from Danio rerio (Zebrafish).